The primary structure comprises 295 residues: G1/S-specific cyclin-D1 (295 aa).

Residues 28 to 152 (LRAMLKAEET…LLVNKLKWNL (125 aa)) form the Cyclin N-terminal domain. Positions 264 to 295 (QQSLDPKAAEEEEEEEEADLACTPTDVRDVNI) are disordered. Lys-270 participates in a covalent cross-link: Glycyl lysine isopeptide (Lys-Gly) (interchain with G-Cter in ubiquitin). The segment covering 273–282 (EEEEEEEEAD) has biased composition (acidic residues). At Thr-286 the chain carries Phosphothreonine.

Belongs to the cyclin family. Cyclin D subfamily. In terms of assembly, interacts with either CDK4 or CDK6 protein kinase to form a serine/threonine kinase holoenzyme complex. The cyclin subunit imparts substrate specificity to the complex. Component of the ternary complex CCND1/CDK4/CDKN1B required for nuclear translocation and modulation of CDK4-mediated kinase activity. Interacts directly with CDKN1B. Can form similar complexes with either CDKN1A or CDKN2A. Interacts with UHRF2; the interaction ubiquitinates CCND1 and appears to occur independently of phosphorylation. Interacts with USP2. Interacts (via cyclin N-terminal domain) with INSM1 (via N-terminal region); the interaction competes with the binding of CCND1 to CDK4 during cell cycle progression and inhibits CDK4 activity. Interacts with CDK4; the interaction is prevented with the binding of CCND1 to INSM1 during cell cycle progression. In terms of processing, phosphorylation at Thr-286 by MAP kinases is required for ubiquitination and degradation by the DCX(AMBRA1) complex. It also plays an essential role for recognition by the FBXO31 component of SCF (SKP1-cullin-F-box) protein ligase complex following DNA damage. Ubiquitinated at Lys-270 by the DCX(AMBRA1) complex during the transition from G1 to S cell phase, leading to its degradation: ubiquitination is dependent on Thr-286 phosphorylation. The DCX(AMBRA1) complex represents the major regulator of CCND1 stability during the G1/S transition. Also ubiquitinated by the SCF(FBXO4) and Cul7-RING(FBXW8) ubiquitin-protein ligase complexes. Following DNA damage it is ubiquitinated by the SCF(FBXO31) protein ligase complex. SCF(FBXO31) ubiquitination is dependent on Thr-286 phosphorylation. Ubiquitinated also by UHRF2 apparently in a phosphorylation-independent manner. Ubiquitination leads to its degradation and G1 arrest. Deubiquitinated by USP2; leading to its stabilization.

The protein resides in the nucleus. It is found in the cytoplasm. The protein localises to the nucleus membrane. Its function is as follows. Regulatory component of the cyclin D1-CDK4 (DC) complex that phosphorylates and inhibits members of the retinoblastoma (RB) protein family including RB1 and regulates the cell-cycle during G(1)/S transition. Phosphorylation of RB1 allows dissociation of the transcription factor E2F from the RB/E2F complex and the subsequent transcription of E2F target genes which are responsible for the progression through the G(1) phase. Hypophosphorylates RB1 in early G(1) phase. Cyclin D-CDK4 complexes are major integrators of various mitogenenic and antimitogenic signals. Also a substrate for SMAD3, phosphorylating SMAD3 in a cell-cycle-dependent manner and repressing its transcriptional activity. Component of the ternary complex, cyclin D1/CDK4/CDKN1B, required for nuclear translocation and activity of the cyclin D-CDK4 complex. Exhibits transcriptional corepressor activity with INSM1 on the NEUROD1 and INS promoters in a cell cycle-independent manner. This Canis lupus familiaris (Dog) protein is G1/S-specific cyclin-D1 (CCND1).